The primary structure comprises 227 residues: Mediator of RNA polymerase II transcription subunit 18 (227 aa).

Belongs to the Mediator complex subunit 18 family. In terms of assembly, component of the Mediator complex.

The protein localises to the nucleus. In terms of biological role, component of the Mediator complex, a coactivator involved in the regulated transcription of nearly all RNA polymerase II-dependent genes. Mediator functions as a bridge to convey information from gene-specific regulatory proteins to the basal RNA polymerase II transcription machinery. Mediator is recruited to promoters by direct interactions with regulatory proteins and serves as a scaffold for the assembly of a functional preinitiation complex with RNA polymerase II and the general transcription factors. The sequence is that of Mediator of RNA polymerase II transcription subunit 18 (mdt-18) from Caenorhabditis briggsae.